Here is a 351-residue protein sequence, read N- to C-terminus: uncharacterized protein (351 aa).

Residues 25-67 (KKAETETLPPANSQPAAPAPEAKPTEAPVAKAEAKPETPAQPV) are disordered. A compositionally biased stretch (low complexity) spans 33–55 (PPANSQPAAPAPEAKPTEAPVAK).

This is an uncharacterized protein from Escherichia coli (strain K12).